The following is a 476-amino-acid chain: Glucose-1-phosphate adenylyltransferase (476 aa).

Residues Tyr114, Gly179, 194 to 195 (EK), and Ser212 each bind alpha-D-glucose 1-phosphate.

This sequence belongs to the bacterial/plant glucose-1-phosphate adenylyltransferase family. As to quaternary structure, homotetramer.

The catalysed reaction is alpha-D-glucose 1-phosphate + ATP + H(+) = ADP-alpha-D-glucose + diphosphate. Its pathway is glycan biosynthesis; glycogen biosynthesis. Functionally, involved in the biosynthesis of ADP-glucose, a building block required for the elongation reactions to produce glycogen. Catalyzes the reaction between ATP and alpha-D-glucose 1-phosphate (G1P) to produce pyrophosphate and ADP-Glc. The protein is Glucose-1-phosphate adenylyltransferase of Yersinia pestis bv. Antiqua (strain Antiqua).